The sequence spans 97 residues: Putative pterin-4-alpha-carbinolamine dehydratase (97 aa).

The protein belongs to the pterin-4-alpha-carbinolamine dehydratase family.

The enzyme catalyses (4aS,6R)-4a-hydroxy-L-erythro-5,6,7,8-tetrahydrobiopterin = (6R)-L-erythro-6,7-dihydrobiopterin + H2O. This is Putative pterin-4-alpha-carbinolamine dehydratase from Saccharolobus solfataricus (strain ATCC 35092 / DSM 1617 / JCM 11322 / P2) (Sulfolobus solfataricus).